The sequence spans 186 residues: Peptidyl-tRNA hydrolase (186 aa).

TRNA is bound at residue Tyr-14. The Proton acceptor role is filled by His-19. Positions 64, 66, and 112 each coordinate tRNA.

It belongs to the PTH family. Monomer.

The protein localises to the cytoplasm. It catalyses the reaction an N-acyl-L-alpha-aminoacyl-tRNA + H2O = an N-acyl-L-amino acid + a tRNA + H(+). Hydrolyzes ribosome-free peptidyl-tRNAs (with 1 or more amino acids incorporated), which drop off the ribosome during protein synthesis, or as a result of ribosome stalling. In terms of biological role, catalyzes the release of premature peptidyl moieties from peptidyl-tRNA molecules trapped in stalled 50S ribosomal subunits, and thus maintains levels of free tRNAs and 50S ribosomes. This chain is Peptidyl-tRNA hydrolase, found in Listeria monocytogenes serotype 4a (strain HCC23).